The sequence spans 209 residues: Eukaryotic translation initiation factor isoform 4E-2 (209 aa).

Positions 1–29 (MAEVEAALPVAATETPEVAAEGDAGAAEA) are disordered. The segment covering 9–29 (PVAATETPEVAAEGDAGAAEA) has biased composition (low complexity). MRNA-binding positions include 51-56 (PGAAWG), Lys-83, and 101-102 (WE). Cys-106 and Cys-145 are oxidised to a cystine. Residues 152–157 (RQRQDK) and 197–200 (RSQK) contribute to the mRNA site.

This sequence belongs to the eukaryotic initiation factor 4E family. As to quaternary structure, EIF4F is a multi-subunit complex, the composition of which varies with external and internal environmental conditions. It is composed of at least EIF4A, EIF4E and EIF4G. EIF4E is also known to interact with other partners. In higher plants two isoforms of EIF4F have been identified, named isoform EIF4F and isoform EIF(iso)4F. Isoform EIF4F has subunits p220 and p26, whereas isoform EIF(iso)4F has subunits p82 and p28. Post-translationally, according to the redox status, the Cys-106-Cys-145 disulfide bridge may have a role in regulating protein function by affecting its ability to bind capped mRNA.

The protein localises to the cytoplasm. The protein resides in the nucleus. In terms of biological role, component of the protein complex eIF4F, which is involved in the recognition of the mRNA cap, ATP-dependent unwinding of 5'-terminal secondary structure and recruitment of mRNA to the ribosome. Recognizes and binds the 7-methylguanosine-containing mRNA cap during an early step in the initiation of protein synthesis and facilitates ribosome binding by inducing the unwinding of the mRNAs secondary structures. The sequence is that of Eukaryotic translation initiation factor isoform 4E-2 from Triticum aestivum (Wheat).